Here is a 111-residue protein sequence, read N- to C-terminus: Aspartate 1-decarboxylase (111 aa).

The Schiff-base intermediate with substrate; via pyruvic acid role is filled by S25. S25 is modified (pyruvic acid (Ser)). Substrate is bound at residue T57. The Proton donor role is filled by Y58. Position 73 to 75 (73 to 75) interacts with substrate; that stretch reads GPA.

The protein belongs to the PanD family. Heterooctamer of four alpha and four beta subunits. The cofactor is pyruvate. Post-translationally, is synthesized initially as an inactive proenzyme, which is activated by self-cleavage at a specific serine bond to produce a beta-subunit with a hydroxyl group at its C-terminus and an alpha-subunit with a pyruvoyl group at its N-terminus.

It localises to the cytoplasm. The catalysed reaction is L-aspartate + H(+) = beta-alanine + CO2. It functions in the pathway cofactor biosynthesis; (R)-pantothenate biosynthesis; beta-alanine from L-aspartate: step 1/1. Functionally, catalyzes the pyruvoyl-dependent decarboxylation of aspartate to produce beta-alanine. The sequence is that of Aspartate 1-decarboxylase from Francisella tularensis subsp. holarctica (strain LVS).